The chain runs to 175 residues: Anterior gradient protein 2 homolog (175 aa).

The first 20 residues, 1 to 20, serve as a signal peptide directing secretion; sequence MEKISVSAFLLLVALSYTLA. The required to promote cell adhesion stretch occupies residues 21 to 40; sequence RDTTVKPAAKKDTKDSRPKL. 2 short sequence motifs (homodimer stabilization; interchain) span residues 45-54 and 60-67; these read SRGWGDQLIW and EALYKSKT.

It belongs to the AGR family. Monomer and homodimer. Interacts with LYPD3 and DAG1 (alphaDAG1). Interacts with MUC2; disulfide-linked.

The protein resides in the secreted. Its subcellular location is the endoplasmic reticulum. Functionally, required for MUC2 post-transcriptional synthesis and secretion. May play a role in the production of mucus by intestinal cells. Proto-oncogene that may play a role in cell migration, cell differentiation and cell growth. Promotes cell adhesion. In Pongo abelii (Sumatran orangutan), this protein is Anterior gradient protein 2 homolog (AGR2).